The chain runs to 257 residues: MSVYSFSDVSLVAKALGAFVKEKSEASIKRHGVFTLALSGGSLPKVLAEGLAQQRGIEFSKWEVFFADERIVPLDDENSNYALCKKLIFDKFEGFDPKKIHTINPELLKENPIDPQNVADEYEKQLVHVFANSSTVKVPVFDLLLLGCGPDGHTCSLFPDHEVLQEDVAWVAPVTDSPKPPKDRITLTLPVVTHAQAIAFVTTGAGKKDILPIVIEDFTSKLPSALITRNNLTRTSWFVDDEASANLERSSLKVFPQ.

It belongs to the glucosamine/galactosamine-6-phosphate isomerase family. 6-phosphogluconolactonase subfamily.

It carries out the reaction 6-phospho-D-glucono-1,5-lactone + H2O = 6-phospho-D-gluconate + H(+). Its pathway is carbohydrate degradation; pentose phosphate pathway; D-ribulose 5-phosphate from D-glucose 6-phosphate (oxidative stage): step 2/3. Functionally, hydrolysis of 6-phosphogluconolactone to 6-phosphogluconate. In Schizosaccharomyces pombe (strain 972 / ATCC 24843) (Fission yeast), this protein is Probable 6-phosphogluconolactonase.